The following is a 306-amino-acid chain: Small ribosomal subunit biogenesis GTPase RsgA (306 aa).

One can recognise a CP-type G domain in the interval 77 to 236 (KNELKRPNVA…IVDTPGFSKL (160 aa)). GTP contacts are provided by residues 126–129 (SKID) and 179–187 (GQTGVGKST). 4 residues coordinate Zn(2+): cysteine 260, cysteine 266, histidine 268, and cysteine 274.

It belongs to the TRAFAC class YlqF/YawG GTPase family. RsgA subfamily. Monomer. Associates with 30S ribosomal subunit, binds 16S rRNA. Requires Zn(2+) as cofactor.

It is found in the cytoplasm. Its function is as follows. One of several proteins that assist in the late maturation steps of the functional core of the 30S ribosomal subunit. Helps release RbfA from mature subunits. May play a role in the assembly of ribosomal proteins into the subunit. Circularly permuted GTPase that catalyzes slow GTP hydrolysis, GTPase activity is stimulated by the 30S ribosomal subunit. The chain is Small ribosomal subunit biogenesis GTPase RsgA from Onion yellows phytoplasma (strain OY-M).